Reading from the N-terminus, the 260-residue chain is Acetylglutamate kinase (260 aa).

Substrate-binding positions include Gly-46–Gly-47, Arg-68, and Asn-160.

This sequence belongs to the acetylglutamate kinase family. ArgB subfamily.

It is found in the cytoplasm. The enzyme catalyses N-acetyl-L-glutamate + ATP = N-acetyl-L-glutamyl 5-phosphate + ADP. It participates in amino-acid biosynthesis; L-arginine biosynthesis; N(2)-acetyl-L-ornithine from L-glutamate: step 2/4. In terms of biological role, catalyzes the ATP-dependent phosphorylation of N-acetyl-L-glutamate. The polypeptide is Acetylglutamate kinase (Shewanella denitrificans (strain OS217 / ATCC BAA-1090 / DSM 15013)).